We begin with the raw amino-acid sequence, 278 residues long: Alcohol dehydrogenase-related 31 kDa protein (278 aa).

An NAD(+)-binding site is contributed by Tyr-11–Leu-34. Ser-139 contacts substrate. The active-site Proton acceptor is Tyr-152.

It belongs to the short-chain dehydrogenases/reductases (SDR) family.

This is Alcohol dehydrogenase-related 31 kDa protein (Adhr) from Drosophila pseudoobscura pseudoobscura (Fruit fly).